Reading from the N-terminus, the 291-residue chain is Popeye domain-containing protein 3 (291 aa).

The N-linked (GlcNAc...) asparagine glycan is linked to Asn-4. The next 3 membrane-spanning stretches (helical) occupy residues 27–44 (GAIY…FMGG), 48–70 (FGLL…WAWV), and 77–99 (IFSW…AYQV).

The protein belongs to the popeye family. Expressed predominantly in skeletal muscle (at protein level). Also detected in heart.

It localises to the membrane. Functionally, may play a role in the maintenance of heart function mediated, at least in part, through cAMP-binding. May play a role in the regulation of KCNK2/TREK-1-mediated current amplitude. This Homo sapiens (Human) protein is Popeye domain-containing protein 3 (POPDC3).